The primary structure comprises 419 residues: Probable G-protein coupled receptor 63 (419 aa).

Over 1-81 the chain is Extracellular; the sequence is MVFSAVLTAF…AFKSLNLPLQ (81 aa). 3 N-linked (GlcNAc...) asparagine glycosylation sites follow: Asn16, Asn28, and Asn62. The helical transmembrane segment at 82–104 threads the bilayer; the sequence is ITLSAIMIFILFVSFLGNLVVCL. At 105–115 the chain is on the cytoplasmic side; that stretch reads MVYQKAAMRSA. Residues 116–138 traverse the membrane as a helical segment; it reads INILLASLAFADMLLAVLNMPFA. Residues 139-157 lie on the Extracellular side of the membrane; the sequence is LVTILTTRWIFGKFFCRVS. Residues 158 to 177 form a helical membrane-spanning segment; it reads AMFFWLFVIEGVAILLIISI. The Cytoplasmic portion of the chain corresponds to 178–196; sequence DRFLIIVQRQDKLNPYRAK. The helical transmembrane segment at 197-216 threads the bilayer; the sequence is VLIAVSWATSFCVAFPLAVG. Over 217–240 the chain is Extracellular; it reads NPDLQIPSRAPQCVFGYTTNPGYQ. A helical membrane pass occupies residues 241–263; sequence AYVILISLISFFIPFLVILYSFM. Residues 264-315 lie on the Cytoplasmic side of the membrane; it reads GILNTLRHNALRIHSYPEGICLSQASKLGLMSLQRPFQMSIDMGFKTRAFTT. The chain crosses the membrane as a helical span at residues 316–338; sequence ILILFAVFIVCWAPFTTYSLVAT. Topologically, residues 339-352 are extracellular; that stretch reads FSKHFYYQHNFFEI. A helical membrane pass occupies residues 353-375; the sequence is STWLLWLCYLKSALNPLIYYWRI. At 376–419 the chain is on the cytoplasmic side; the sequence is KKFHDACLDMMPKSFKFLPQLPGHTKRRIRPSAVYVCGEHRTVV.

This sequence belongs to the G-protein coupled receptor 1 family. In terms of tissue distribution, expressed in brain; detected in the frontal cortex, with lower levels in the thalamus, caudate, hypothalamus and midbrain.

It localises to the cell membrane. In terms of biological role, orphan receptor. May play a role in brain function. The polypeptide is Probable G-protein coupled receptor 63 (GPR63) (Homo sapiens (Human)).